We begin with the raw amino-acid sequence, 2476 residues long: Non-reducing polyketide synthase pkdA (2476 aa).

The N-terminal acylcarrier protein transacylase domain (SAT) stretch occupies residues 22–230 (PNLNDAYLQS…VISEARLATL (209 aa)). Cys142 (nucleophile; for transacylase activity) is an active-site residue. The active-site Proton donor/acceptor; for transacylase activity is His261. In terms of domain architecture, Ketosynthase family 3 (KS3) spans 388–805 (DESIAVVGMA…GSNASLVVTQ (418 aa)). Catalysis depends on for beta-ketoacyl synthase activity residues Cys554, His689, and His728. A malonyl-CoA:ACP transacylase (MAT) region spans residues 919 to 1204 (FGGQRSSFVG…GSGVTNLASR (286 aa)). Residues 1290 to 1417 (QKGLWTFVGY…GRITFQTPKQ (128 aa)) are N-terminal hotdog fold. The 303-residue stretch at 1290–1592 (QKGLWTFVGY…FVEVSIAGMS (303 aa)) folds into the PKS/mFAS DH domain. Residues 1321-1590 (YVSAHVIAQT…LHFVEVSIAG (270 aa)) are product template (PT) domain. The Proton acceptor; for dehydratase activity role is filled by His1325. Positions 1445 to 1592 (QTIQGSRNIY…FVEVSIAGMS (148 aa)) are C-terminal hotdog fold. Residue Asp1501 is the Proton donor; for dehydratase activity of the active site. Residues 1626–1649 (DVSKNEKDAKAPSKKKESTSKSPG) form a disordered region. The Carrier domain maps to 1650–1724 (HDILARVRTL…SLVKCIGANM (75 aa)). Ser1684 is subject to O-(pantetheine 4'-phosphoryl)serine. A disordered region spans residues 1727-1766 (SDTSRTGDDSSDDLETASAESETSSGINNEDSHNIDRQQI). Positions 1742–1751 (TASAESETSS) are enriched in low complexity. The interval 1881-2030 (ELLRQYPEHA…DCEKTPSSHL (150 aa)) is methyltransferase (CMeT) domain. An NADPH-binding domain region spans residues 2094 to 2340 (VTGATGSLGS…SWCPVDDVAA (247 aa)).

Pantetheine 4'-phosphate is required as a cofactor.

The enzyme catalyses propanoyl-CoA + 3 malonyl-CoA + AH2 + 2 S-adenosyl-L-methionine + H(+) = 2-ethyl-4,6-dihydroxy-3,5-dimethylbenzaldehyde + A + 2 S-adenosyl-L-homocysteine + 3 CO2 + 4 CoA + H2O. It participates in secondary metabolite biosynthesis. Functionally, non-reducing polyketide synthase that synthesizes 6-ethyl-2,4-dihydroxy-3,5-dimethylbenzaldehyde via condensation of one propanoyl-CoA starter unit with 3 malonyl-CoA units, as well as 2 methylation steps. The polypeptide is Non-reducing polyketide synthase pkdA (Emericella nidulans (strain FGSC A4 / ATCC 38163 / CBS 112.46 / NRRL 194 / M139) (Aspergillus nidulans)).